Here is a 426-residue protein sequence, read N- to C-terminus: Gamma-glutamyl phosphate reductase (426 aa).

The protein belongs to the gamma-glutamyl phosphate reductase family.

It localises to the cytoplasm. It carries out the reaction L-glutamate 5-semialdehyde + phosphate + NADP(+) = L-glutamyl 5-phosphate + NADPH + H(+). It participates in amino-acid biosynthesis; L-proline biosynthesis; L-glutamate 5-semialdehyde from L-glutamate: step 2/2. Catalyzes the NADPH-dependent reduction of L-glutamate 5-phosphate into L-glutamate 5-semialdehyde and phosphate. The product spontaneously undergoes cyclization to form 1-pyrroline-5-carboxylate. The polypeptide is Gamma-glutamyl phosphate reductase (Cupriavidus necator (strain ATCC 17699 / DSM 428 / KCTC 22496 / NCIMB 10442 / H16 / Stanier 337) (Ralstonia eutropha)).